A 748-amino-acid chain; its full sequence is E3 ubiquitin-protein ligase DTX3L (748 aa).

An N-acetylalanine modification is found at A2. S9 bears the Phosphoserine mark. Disordered stretches follow at residues 94 to 117 (DLRP…PSLT), 209 to 238 (EQKR…PPDQ), and 528 to 562 (QETP…PAAS). The span at 101–117 (SLTQPVETPSSRPPSLT) shows a compositional bias: polar residues. Composition is skewed to basic and acidic residues over residues 209–219 (EQKRKGSEQKR) and 227–236 (TPPDVEREPP). Phosphoserine is present on S215. At S536 the chain carries Phosphoserine. The RING-type zinc finger occupies 569–608 (CVICMDTISNKHVLPKCKHEFCTSCISKAMLIKPVCPVCL).

The protein belongs to the Deltex family. Homodimer and heterodimer. Can heterodimerize with DTX1, enhancing its ubiquitin ligase activity in vitro. Interacts (via N-terminus) with ADP ribosyltransferase PARP9/BAL1 (via PARP catalytic domain) forming a stable complex; the interaction is required to activate PARP9 but is dispensable for DTX3L catalytic activity. Forms a complex with STAT1 and PARP9 independently of IFNB1 or IFNG-mediated STAT1 'Tyr-701' phosphorylation. Found in a complex with PARP9, STAT1 and H2BC9. Found in a complex with E3 ligase ITCH and ESCRT-0 components HGS and STAM. Interacts (via C-terminus) with ITCH; the interaction is increased upon CXCL12 stimulation and inhibits ITCH catalytic activity; the interaction is direct. Interacts with HGS and STAM; the interaction brings together HGS and STAM and promotes their recruitment to early endosomes. Post-translationally, autoubiquitinated.

It is found in the cytoplasm. The protein localises to the nucleus. Its subcellular location is the early endosome membrane. The protein resides in the lysosome membrane. It carries out the reaction S-ubiquitinyl-[E2 ubiquitin-conjugating enzyme]-L-cysteine + [acceptor protein]-L-lysine = [E2 ubiquitin-conjugating enzyme]-L-cysteine + N(6)-ubiquitinyl-[acceptor protein]-L-lysine.. It functions in the pathway protein modification; protein ubiquitination. Binding to PARP9 enhances DTX3L catalytic activity. In terms of biological role, E3 ubiquitin-protein ligase which, in association with ADP-ribosyltransferase PARP9, plays a role in DNA damage repair and in interferon-mediated antiviral responses. Monoubiquitinates several histones, including histone H2A, H2B, H3 and H4. In response to DNA damage, mediates monoubiquitination of 'Lys-91' of histone H4 (H4K91ub1). The exact role of H4K91ub1 in DNA damage response is still unclear but it may function as a licensing signal for additional histone H4 post-translational modifications such as H4 'Lys-20' methylation (H4K20me). PARP1-dependent PARP9-DTX3L-mediated ubiquitination promotes the rapid and specific recruitment of 53BP1/TP53BP1, UIMC1/RAP80, and BRCA1 to DNA damage sites. By monoubiquitinating histone H2B H2BC9/H2BJ and thereby promoting chromatin remodeling, positively regulates STAT1-dependent interferon-stimulated gene transcription and thus STAT1-mediated control of viral replication. Independently of its catalytic activity, promotes the sorting of chemokine receptor CXCR4 from early endosome to lysosome following CXCL12 stimulation by reducing E3 ligase ITCH activity and thus ITCH-mediated ubiquitination of endosomal sorting complex required for transport ESCRT-0 components HGS and STAM. In addition, required for the recruitment of HGS and STAM to early endosomes. This Mus musculus (Mouse) protein is E3 ubiquitin-protein ligase DTX3L (Dtx3l).